Consider the following 368-residue polypeptide: Propane 2-monooxygenase, hydroxylase component small subunit (368 aa).

Residues Met1–Arg33 are disordered.

It belongs to the TmoE/XamoE family. As to quaternary structure, the propane 2-monooxygenase multicomponent enzyme system is composed of an electron transfer component and a monooxygenase component interacting with the effector protein PrmD. The electron transfer component is composed of a reductase (PrmB), and the monooxygenase component is formed by a large subunit (PrmA) and a small subunit (PrmC). Probably requires the presence of the chaperonin-like protein PrmG to ensure a productive folding, resulting of a soluble PrmC, which leads to the active form of PrmABCD.

The enzyme catalyses propane + NADH + O2 + H(+) = propan-2-ol + NAD(+) + H2O. It catalyses the reaction phenol + NADH + O2 + H(+) = hydroquinone + NAD(+) + H2O. Component of the propane 2-monooxygenase multicomponent enzyme system which is involved in the degradation of propane via the O2-dependent hydroxylation of propane. Under acetone induction, also able to catalyze the oxidation of phenol to yield hydroquinone. The polypeptide is Propane 2-monooxygenase, hydroxylase component small subunit (Gordonia sp. (strain TY-5)).